Here is a 704-residue protein sequence, read N- to C-terminus: Eukaryotic translation initiation factor 2-alpha kinase 1 (704 aa).

Residues 224–667 (FEELELLGKG…LTSNLFHDLV (444 aa)) form the Protein kinase domain. ATP-binding positions include 230 to 238 (LGKGGYGSV) and K253. D491 functions as the Proton acceptor in the catalytic mechanism.

This sequence belongs to the protein kinase superfamily. Ser/Thr protein kinase family. GCN2 subfamily. Autophosphorylated.

It carries out the reaction L-seryl-[protein] + ATP = O-phospho-L-seryl-[protein] + ADP + H(+). The enzyme catalyses L-threonyl-[protein] + ATP = O-phospho-L-threonyl-[protein] + ADP + H(+). Its function is as follows. Mediates down-regulation of protein synthesis in response to stress conditions by the phosphorylation of the alpha subunit of eIF-2 (tif211) on 'Ser-52'. Protein synthesis is inhibited at the level of initiation. Activity is inhibited in the presence of heme. In Schizosaccharomyces pombe (strain 972 / ATCC 24843) (Fission yeast), this protein is Eukaryotic translation initiation factor 2-alpha kinase 1 (hri1).